The sequence spans 350 residues: Secreted effector protein PipB2 (350 aa).

4 consecutive Pentapeptide repeat domains span residues Ala-162–Gly-201, Thr-202–Gly-241, Cys-247–Gly-286, and Ala-287–Asp-326.

As to quaternary structure, interacts with the host kinesin light chain (KLC), a subunit of the kinesin-1 motor complex.

Its subcellular location is the secreted. It is found in the host membrane. Its function is as follows. Effector proteins function to alter host cell physiology and promote bacterial survival in host tissues. Involved in the reorganization of late endosome/lysosome (LE/Lys) compartments in mammalian cells. Necessary and sufficient to link kinesin-1 onto the Salmonella-containing vacuole (SCV) membrane. Required for centrifugal extension of lysosomal glycoprotein-rich membrane tubules, known as Salmonella-induced filaments (Sifs), away from the SCV and toward the cell periphery. Required for virulence, but not for intracellular survival and replication in phagocytic cells. This Salmonella typhimurium (strain LT2 / SGSC1412 / ATCC 700720) protein is Secreted effector protein PipB2 (pipB2).